We begin with the raw amino-acid sequence, 162 residues long: NADH-quinone oxidoreductase subunit C (162 aa).

It belongs to the complex I 30 kDa subunit family. As to quaternary structure, NDH-1 is composed of 14 different subunits. Subunits NuoB, C, D, E, F, and G constitute the peripheral sector of the complex.

The protein resides in the cell inner membrane. It carries out the reaction a quinone + NADH + 5 H(+)(in) = a quinol + NAD(+) + 4 H(+)(out). In terms of biological role, NDH-1 shuttles electrons from NADH, via FMN and iron-sulfur (Fe-S) centers, to quinones in the respiratory chain. The immediate electron acceptor for the enzyme in this species is believed to be ubiquinone. Couples the redox reaction to proton translocation (for every two electrons transferred, four hydrogen ions are translocated across the cytoplasmic membrane), and thus conserves the redox energy in a proton gradient. The chain is NADH-quinone oxidoreductase subunit C from Geobacter sulfurreducens (strain ATCC 51573 / DSM 12127 / PCA).